Reading from the N-terminus, the 81-residue chain is Ferredoxin (81 aa).

The region spanning 2–30 (KYTIVDKETCIACGACGAAAPDIYDYDED) is the 4Fe-4S ferredoxin-type domain. Residues Cys-11, Cys-14, Cys-17, and Cys-61 each contribute to the [4Fe-4S] cluster site.

[4Fe-4S] cluster serves as cofactor.

In terms of biological role, ferredoxins are iron-sulfur proteins that transfer electrons in a wide variety of metabolic reactions. In Bacillus thermoproteolyticus, this protein is Ferredoxin.